The chain runs to 246 residues: Complement C1q tumor necrosis factor-related protein 3 (246 aa).

A signal peptide spans 1 to 22; that stretch reads MLGRQRIWWHLLPLLFLPFCLC. Positions 51–113 constitute a Collagen-like domain; sequence GYQGPPGPPG…KGEKGYPGVP (63 aa). Residues 53-112 form a disordered region; the sequence is QGPPGPPGPPGIPGNHGNNGNNGATGHEGAKGEKGDKGDLGPRGERGQHGPKGEKGYPGV. Positions 55–64 are enriched in pro residues; the sequence is PPGPPGPPGI. Over residues 65 to 74 the composition is skewed to low complexity; it reads PGNHGNNGNN. Residues 80–107 show a composition bias toward basic and acidic residues; the sequence is EGAKGEKGDKGDLGPRGERGQHGPKGEK. The 134-residue stretch at 113–246 folds into the C1q domain; the sequence is PPELQIAFMA…FAGFLLFETK (134 aa).

Its subcellular location is the secreted. In Mus musculus (Mouse), this protein is Complement C1q tumor necrosis factor-related protein 3 (C1qtnf3).